The primary structure comprises 334 residues: MAFNLRNRSFVKELDFTPQELMFLITLAADLKAAKYAGTEQPQLSGKNIALIFEKTSTRTRCAFEVAAHDQGAHVTYLDPSGSQIGHKESIKDTARVLGRMFDAIEYRGASQATVEELAEYAGVPVWNGLTDEWHPTQMLADFLTIMEHTDKPLREVTLAYMGDARNNLGNSLTVTGAMLGIDVRMVAPRELWPDEERVAAPARAIAETTGARVTFTDDIAEGLAGADFIYTDVWVSMGEPSEVWDERIRQLLPYQVNAEALKATGNPDVKFLHCLPAFHDLGTEVAREIHARTGLTALEVTDEVFESPASIVFDQAENRMHTIKALMVATLGR.

Residues 57–60 (STRT), Gln-84, Arg-108, and 135–138 (HPTQ) contribute to the carbamoyl phosphate site. L-ornithine-binding positions include Asn-168, Asp-233, and 237–238 (SM). Carbamoyl phosphate-binding positions include 275–276 (CL) and Arg-320.

The protein belongs to the aspartate/ornithine carbamoyltransferase superfamily. OTCase family.

It localises to the cytoplasm. The enzyme catalyses carbamoyl phosphate + L-ornithine = L-citrulline + phosphate + H(+). Its pathway is amino-acid biosynthesis; L-arginine biosynthesis; L-arginine from L-ornithine and carbamoyl phosphate: step 1/3. Its function is as follows. Reversibly catalyzes the transfer of the carbamoyl group from carbamoyl phosphate (CP) to the N(epsilon) atom of ornithine (ORN) to produce L-citrulline. This is Ornithine carbamoyltransferase from Thermobifida fusca (strain YX).